Here is a 482-residue protein sequence, read N- to C-terminus: Lipoamide acyltransferase component of branched-chain alpha-keto acid dehydrogenase complex, mitochondrial (482 aa).

Residues 1 to 61 constitute a mitochondrion transit peptide; that stretch reads MAAARVLRTW…HSLRTAAVLQ (61 aa). One can recognise a Lipoyl-binding domain in the interval 64-139; that stretch reads VVQFKLSDIG…YVGKPLIDIE (76 aa). N6-lipoyllysine is present on K105. The residue at position 133 (K133) is an N6-succinyllysine. The tract at residues 145 to 160 is critical for association with PPM1K; sequence DSEEDVVETPAVSHDE. Residues 172 to 209 form the Peripheral subunit-binding (PSBD) domain; sequence LATPAVRRLAMENNIKLSEVVGSGKDGRILKEDILSFL. The residue at position 196 (K196) is an N6-acetyllysine; alternate. K196 is modified (N6-succinyllysine; alternate). N6-acetyllysine is present on K202. Residues 217–252 are disordered; sequence LPPSPKSEITPPPPQPKDRTFPTPIAKPPVFTGKDR. Residues 218 to 231 are compositionally biased toward pro residues; that stretch reads PPSPKSEITPPPPQ. Position 220 is a phosphoserine (S220). K243 and K250 each carry N6-acetyllysine. The residue at position 261 (K261) is an N6-succinyllysine. K289 is modified (N6-acetyllysine; alternate). The residue at position 289 (K289) is an N6-succinyllysine; alternate. A CoA-binding site is contributed by R291. Residues K295 and K304 each carry the N6-acetyllysine modification. CoA-binding residues include S306, D349, Q378, S399, N400, S403, G424, and I426. Residue K435 is modified to N6-acetyllysine. Residue K440 is modified to N6-acetyllysine; alternate. K440 carries the post-translational modification N6-succinyllysine; alternate. Active-site residues include H452 and D456.

It belongs to the 2-oxoacid dehydrogenase family. In terms of assembly, forms a 24-polypeptide structural core with octahedral symmetry that represents the E2 component of the branched-chain alpha-ketoacid dehydrogenase (BCKDH) complex. The BCKDH complex is composed of three major building blocks E1, E2 and E3. It is organized around E2, a 24-meric cubic core composed of DBT, to which are associated 6 to 12 copies of E1, and approximately 6 copies of the dehydrogenase E3, a DLD dimer. Interacts with PPM1K with a 24:1 stoichiometry; the N-terminal region (residues 49-61) of PPM1K and C-terminal linker of the lipoyl domain of DBT/E2 (residues 145-160) are critical for this interaction whereas the lipoyl prosthetic group is dispensable. This interaction requires colocalization in mitochondria. PPM1K competes with BCKDK for binding to DBT; this interaction is modulated by branched-chain alpha-keto acids (BCKAs). At steady state, BCKDH holoenzyme preferentially binds BCKDK and BCKDHA is phosphorylated. In response to high levels of BCKAs, BCKDK is replaced by PPM1K leading to BCKDHA dephosphorylation. The cofactor is (R)-lipoate.

It localises to the mitochondrion matrix. It carries out the reaction N(6)-[(R)-dihydrolipoyl]-L-lysyl-[protein] + 2-methylpropanoyl-CoA = N(6)-[(R)-S(8)-2-methylpropanoyldihydrolipoyl]-L-lysyl-[protein] + CoA. In terms of biological role, the branched-chain alpha-keto dehydrogenase complex catalyzes the overall conversion of alpha-keto acids to acyl-CoA and CO(2). It contains multiple copies of three enzymatic components: branched-chain alpha-keto acid decarboxylase (E1), lipoamide acyltransferase (E2) and lipoamide dehydrogenase (E3). Within this complex, the catalytic function of this enzyme is to accept, and to transfer to coenzyme A, acyl groups that are generated by the branched-chain alpha-keto acid decarboxylase component. The protein is Lipoamide acyltransferase component of branched-chain alpha-keto acid dehydrogenase complex, mitochondrial (Dbt) of Mus musculus (Mouse).